Consider the following 505-residue polypeptide: ATP synthase subunit alpha (505 aa).

Residue 171–178 (GDRQTGKT) participates in ATP binding.

The protein belongs to the ATPase alpha/beta chains family. In terms of assembly, F-type ATPases have 2 components, CF(1) - the catalytic core - and CF(0) - the membrane proton channel. CF(1) has five subunits: alpha(3), beta(3), gamma(1), delta(1), epsilon(1). CF(0) has three main subunits: a(1), b(2) and c(9-12). The alpha and beta chains form an alternating ring which encloses part of the gamma chain. CF(1) is attached to CF(0) by a central stalk formed by the gamma and epsilon chains, while a peripheral stalk is formed by the delta and b chains.

It is found in the cell inner membrane. It catalyses the reaction ATP + H2O + 4 H(+)(in) = ADP + phosphate + 5 H(+)(out). Functionally, produces ATP from ADP in the presence of a proton gradient across the membrane. The alpha chain is a regulatory subunit. The chain is ATP synthase subunit alpha from Campylobacter hominis (strain ATCC BAA-381 / DSM 21671 / CCUG 45161 / LMG 19568 / NCTC 13146 / CH001A).